Here is a 548-residue protein sequence, read N- to C-terminus: Alpha-humulene synthase (548 aa).

Mg(2+)-binding residues include D302, D306, and E453. A DDXXD motif motif is present at residues 302–306 (DDIYD).

It belongs to the terpene synthase family. In terms of tissue distribution, mostly expressed in rhizomes.

The catalysed reaction is (2E,6E)-farnesyl diphosphate = alpha-humulene + diphosphate. Functionally, catalyzes the formation of alpha-humulene in the first step of zerumbone biosynthesis, a highly promising multi-anticancer agent. Also mediates formation of beta-caryophyllene at a much lower level. This is Alpha-humulene synthase (ZSS1) from Zingiber zerumbet (Shampoo ginger).